A 423-amino-acid chain; its full sequence is Enolase (423 aa).

Gln-165 lines the (2R)-2-phosphoglycerate pocket. Glu-209 acts as the Proton donor in catalysis. 3 residues coordinate Mg(2+): Asp-244, Glu-285, and Asp-310. Lys-335, Arg-364, Ser-365, and Lys-386 together coordinate (2R)-2-phosphoglycerate. Lys-335 serves as the catalytic Proton acceptor.

It belongs to the enolase family. In terms of assembly, homooctamer formed by a tetramer of dimers. Mg(2+) serves as cofactor.

The protein resides in the cytoplasm. Its subcellular location is the secreted. The protein localises to the cell surface. The catalysed reaction is (2R)-2-phosphoglycerate = phosphoenolpyruvate + H2O. Its pathway is carbohydrate degradation; glycolysis; pyruvate from D-glyceraldehyde 3-phosphate: step 4/5. With respect to regulation, the covalent binding to the substrate causes inactivation of the enzyme, and possibly serves as a signal for the export of the protein. Catalyzes the reversible conversion of 2-phosphoglycerate (2-PG) into phosphoenolpyruvate (PEP). It is essential for the degradation of carbohydrates via glycolysis. The sequence is that of Enolase from Methanocaldococcus jannaschii (strain ATCC 43067 / DSM 2661 / JAL-1 / JCM 10045 / NBRC 100440) (Methanococcus jannaschii).